The primary structure comprises 389 residues: 5-hydroxytryptamine receptor 1B (389 aa).

Residues 1-45 lie on the Extracellular side of the membrane; it reads MGNPEASCTPPAVLGSQTGLPHANVSAPPNNCSAPSHIYQDSIAL. N-linked (GlcNAc...) asparagine glycans are attached at residues Asn-24 and Asn-31. Residues 46–71 form a helical membrane-spanning segment; sequence PWKVLLVVLLALITLATTLSNAFVIA. The Cytoplasmic portion of the chain corresponds to 72–85; sequence TVYRTRKLHTPANY. Residues 86–110 traverse the membrane as a helical segment; that stretch reads LIASLAFTDLLVSILVMPISTMYTV. At 111–118 the chain is on the extracellular side; the sequence is TGRWTLGQ. Residues 119-144 form a helical membrane-spanning segment; that stretch reads ALCDFWLSSDITCCTASIMHLCVIAL. Residues Cys-121 and Cys-198 are joined by a disulfide bond. Residues Asp-128 and Thr-133 each coordinate ergotamine. Residues 145 to 147 carry the DRY motif; important for ligand-induced conformation changes and signaling motif; that stretch reads DRY. Over 145–164 the chain is Cytoplasmic; it reads DRYWAITDAVGYSAKRTPRR. A helical membrane pass occupies residues 165-183; the sequence is AAGMIALVWVFSICISLPP. The Extracellular segment spans residues 184-204; the sequence is FFWRQAKAEEEVLDCLVNTDH. Ergotamine is bound at residue Val-200. The helical transmembrane segment at 205 to 228 threads the bilayer; it reads VLYTVYSTGGAFYLPTLLLIALYG. Topologically, residues 229-314 are cytoplasmic; the sequence is RIYVEARSRI…AARERKATKT (86 aa). The chain crosses the membrane as a helical span at residues 315 to 336; that stretch reads LGVILGAFIVCWLPFFIISLVM. Over 337 to 346 the chain is Extracellular; sequence PICKDACWFH. A helical membrane pass occupies residues 347–369; it reads MAIFDFFTWLGYLNSLINPIIYT. Positions 364–368 match the NPxxY motif; important for ligand-induced conformation changes and signaling motif; it reads NPIIY. Residues 370–389 are Cytoplasmic-facing; sequence MSNEDFKQAFHKLIRFKCTT. Cys-387 carries the S-palmitoyl cysteine lipid modification.

Belongs to the G-protein coupled receptor 1 family. Homodimer. Heterodimer with HTR1D. Post-translationally, phosphorylated. Desensitization of the receptor may be mediated by its phosphorylation. In terms of processing, palmitoylated.

It is found in the cell membrane. Its function is as follows. G-protein coupled receptor for 5-hydroxytryptamine (serotonin). Also functions as a receptor for ergot alkaloid derivatives, various anxiolytic and antidepressant drugs and other psychoactive substances, such as lysergic acid diethylamide (LSD). Ligand binding causes a conformation change that triggers signaling via guanine nucleotide-binding proteins (G proteins) and modulates the activity of downstream effectors, such as adenylate cyclase. HTR1B is coupled to G(i)/G(o) G alpha proteins and mediates inhibitory neurotransmission by inhibiting adenylate cyclase activity. Arrestin family members inhibit signaling via G proteins and mediate activation of alternative signaling pathways. Regulates the release of 5-hydroxytryptamine, dopamine and acetylcholine in the brain, and thereby affects neural activity, nociceptive processing, pain perception, mood and behavior. Besides, plays a role in vasoconstriction of cerebral arteries. This is 5-hydroxytryptamine receptor 1B (HTR1B) from Cavia porcellus (Guinea pig).